We begin with the raw amino-acid sequence, 755 residues long: Beta-galactosidase (755 aa).

E382 acts as the Proton donor in catalysis. Catalysis depends on E463, which acts as the Nucleophile.

This sequence belongs to the glycosyl hydrolase 2 family.

The catalysed reaction is Hydrolysis of terminal non-reducing beta-D-galactose residues in beta-D-galactosides.. The sequence is that of Beta-galactosidase (lacZ) from Rhizobium meliloti (Ensifer meliloti).